Reading from the N-terminus, the 238-residue chain is Ribonuclease PH (238 aa).

Phosphate-binding positions include Arg86 and 124–126 (GTR).

This sequence belongs to the RNase PH family. In terms of assembly, homohexameric ring arranged as a trimer of dimers.

It carries out the reaction tRNA(n+1) + phosphate = tRNA(n) + a ribonucleoside 5'-diphosphate. Its function is as follows. Phosphorolytic 3'-5' exoribonuclease that plays an important role in tRNA 3'-end maturation. Removes nucleotide residues following the 3'-CCA terminus of tRNAs; can also add nucleotides to the ends of RNA molecules by using nucleoside diphosphates as substrates, but this may not be physiologically important. Probably plays a role in initiation of 16S rRNA degradation (leading to ribosome degradation) during starvation. The sequence is that of Ribonuclease PH from Edwardsiella ictaluri (strain 93-146).